Here is a 233-residue protein sequence, read N- to C-terminus: Ycf53-like protein (233 aa).

This sequence belongs to the ycf53 family.

The sequence is that of Ycf53-like protein from Synechocystis sp. (strain ATCC 27184 / PCC 6803 / Kazusa).